A 110-amino-acid polypeptide reads, in one-letter code: Ribonuclease P protein component 4 (110 aa).

Cysteine 65, cysteine 68, cysteine 94, and cysteine 97 together coordinate Zn(2+).

It belongs to the eukaryotic/archaeal RNase P protein component 4 family. Consists of a catalytic RNA component and at least 4-5 protein subunits. Requires Zn(2+) as cofactor.

Its subcellular location is the cytoplasm. The catalysed reaction is Endonucleolytic cleavage of RNA, removing 5'-extranucleotides from tRNA precursor.. Part of ribonuclease P, a protein complex that generates mature tRNA molecules by cleaving their 5'-ends. In Methanococcus maripaludis (strain C5 / ATCC BAA-1333), this protein is Ribonuclease P protein component 4.